The chain runs to 1276 residues: Probable ubiquitin carboxyl-terminal hydrolase K02C4.3 (1276 aa).

A USP domain is found at 168-762 (TGLYNSGNTC…SAYMLMYVRS (595 aa)). C177 serves as the catalytic Nucleophile. Positions 375 to 402 (SMDTEAATSSNLPGNSVENHPNPAAPEV) are disordered. Residues 380 to 393 (AATSSNLPGNSVEN) show a composition bias toward polar residues. H707 serves as the catalytic Proton acceptor.

The protein belongs to the peptidase C19 family.

It carries out the reaction Thiol-dependent hydrolysis of ester, thioester, amide, peptide and isopeptide bonds formed by the C-terminal Gly of ubiquitin (a 76-residue protein attached to proteins as an intracellular targeting signal).. The sequence is that of Probable ubiquitin carboxyl-terminal hydrolase K02C4.3 from Caenorhabditis elegans.